A 178-amino-acid chain; its full sequence is Large ribosomal subunit protein uL6 (178 aa).

Belongs to the universal ribosomal protein uL6 family. Part of the 50S ribosomal subunit.

In terms of biological role, this protein binds to the 23S rRNA, and is important in its secondary structure. It is located near the subunit interface in the base of the L7/L12 stalk, and near the tRNA binding site of the peptidyltransferase center. The chain is Large ribosomal subunit protein uL6 from Kocuria rhizophila (strain ATCC 9341 / DSM 348 / NBRC 103217 / DC2201).